Reading from the N-terminus, the 117-residue chain is UPF0342 protein lwe2240 (117 aa).

This sequence belongs to the UPF0342 family.

This Listeria welshimeri serovar 6b (strain ATCC 35897 / DSM 20650 / CCUG 15529 / CIP 8149 / NCTC 11857 / SLCC 5334 / V8) protein is UPF0342 protein lwe2240.